Consider the following 132-residue polypeptide: Global transcriptional regulator Spx 2 (132 aa).

A disulfide bridge links Cys10 with Cys13.

It belongs to the ArsC family. Spx subfamily. Interacts with the C-terminal domain of the alpha subunit of the RNAP.

It is found in the cytoplasm. Functionally, global transcriptional regulator that plays a key role in stress response and exerts either positive or negative regulation of genes. Acts by interacting with the C-terminal domain of the alpha subunit of the RNA polymerase (RNAP). This interaction can enhance binding of RNAP to the promoter region of target genes and stimulate their transcription, or block interaction of RNAP with activator. The chain is Global transcriptional regulator Spx 2 from Lactococcus lactis subsp. lactis (strain IL1403) (Streptococcus lactis).